We begin with the raw amino-acid sequence, 1431 residues long: Probable serine/threonine-protein kinase irlA (1431 aa).

Positions 1-10 (MTKPIFKSKT) are enriched in basic residues. 2 disordered regions span residues 1–81 (MTKP…EKEE) and 736–879 (KREK…NNNK). Over residues 25-43 (NEDEEEEEGGEEGGEEEEI) the composition is skewed to acidic residues. The segment covering 46 to 67 (NKNSNNSSSNSNNNNNDNNNNN) has biased composition (low complexity). Coiled-coil stretches lie at residues 57–97 (NNNN…LDME) and 715–759 (KKRS…NNNN). The segment covering 68 to 81 (GEERKVEKEEEKEE) has biased composition (basic and acidic residues). Positions 738–749 (EKKKQKDKKKNK) are enriched in basic residues. A compositionally biased stretch (low complexity) spans 750–776 (SNQNQKNNNNQNNQSNNNKINSPSSNK). A compositionally biased stretch (polar residues) spans 777–791 (LTQNVTPPSSPVNII). Low complexity predominate over residues 792 to 812 (TSSSTTSSSTSSTTSSTTSST). A compositionally biased stretch (polar residues) spans 821–838 (TLPIKTSSPTKPESQKPS). Low complexity predominate over residues 854 to 878 (NNNNNNNNNNNNNNNNNNNNNNNNN). The stretch at 860–971 (NNNNNNNNNN…QESIQLNQTL (112 aa)) forms a coiled coil. Residues 987 to 1261 (RDENNIIGRG…IDTILNHPLF (275 aa)) form the Protein kinase domain. Residues 993–1001 (IGRGSNGTL) and Lys-1016 contribute to the ATP site. The active-site Proton acceptor is the Asp-1130. Positions 1264 to 1431 (TNEKIKFYES…NSKDYLNIKF (168 aa)) constitute a KEN domain.

Belongs to the protein kinase superfamily. Ser/Thr protein kinase family.

The enzyme catalyses L-seryl-[protein] + ATP = O-phospho-L-seryl-[protein] + ADP + H(+). It catalyses the reaction L-threonyl-[protein] + ATP = O-phospho-L-threonyl-[protein] + ADP + H(+). The chain is Probable serine/threonine-protein kinase irlA (irlA) from Dictyostelium discoideum (Social amoeba).